Reading from the N-terminus, the 97-residue chain is Aspartyl/glutamyl-tRNA(Asn/Gln) amidotransferase subunit C (97 aa).

It belongs to the GatC family. Heterotrimer of A, B and C subunits.

It catalyses the reaction L-glutamyl-tRNA(Gln) + L-glutamine + ATP + H2O = L-glutaminyl-tRNA(Gln) + L-glutamate + ADP + phosphate + H(+). The enzyme catalyses L-aspartyl-tRNA(Asn) + L-glutamine + ATP + H2O = L-asparaginyl-tRNA(Asn) + L-glutamate + ADP + phosphate + 2 H(+). Allows the formation of correctly charged Asn-tRNA(Asn) or Gln-tRNA(Gln) through the transamidation of misacylated Asp-tRNA(Asn) or Glu-tRNA(Gln) in organisms which lack either or both of asparaginyl-tRNA or glutaminyl-tRNA synthetases. The reaction takes place in the presence of glutamine and ATP through an activated phospho-Asp-tRNA(Asn) or phospho-Glu-tRNA(Gln). The chain is Aspartyl/glutamyl-tRNA(Asn/Gln) amidotransferase subunit C from Prochlorococcus marinus (strain MIT 9215).